We begin with the raw amino-acid sequence, 447 residues long: Xylose isomerase (447 aa).

Catalysis depends on residues His-102 and Asp-105. Mg(2+) is bound by residues Glu-233, Glu-269, His-272, Asp-297, Asp-308, Asp-310, and Asp-340.

It belongs to the xylose isomerase family. In terms of assembly, homotetramer. Mg(2+) is required as a cofactor.

It is found in the cytoplasm. It catalyses the reaction alpha-D-xylose = alpha-D-xylulofuranose. This is Xylose isomerase from Pediococcus pentosaceus (strain ATCC 25745 / CCUG 21536 / LMG 10740 / 183-1w).